The primary structure comprises 351 residues: Histidinol-phosphate aminotransferase (351 aa).

At Lys-213 the chain carries N6-(pyridoxal phosphate)lysine.

This sequence belongs to the class-II pyridoxal-phosphate-dependent aminotransferase family. Histidinol-phosphate aminotransferase subfamily. In terms of assembly, homodimer. It depends on pyridoxal 5'-phosphate as a cofactor.

The catalysed reaction is L-histidinol phosphate + 2-oxoglutarate = 3-(imidazol-4-yl)-2-oxopropyl phosphate + L-glutamate. It carries out the reaction L-histidine + 2-oxoglutarate = 3-(imidazol-5-yl)pyruvate + L-glutamate. Its pathway is amino-acid biosynthesis; L-histidine biosynthesis; L-histidine from 5-phospho-alpha-D-ribose 1-diphosphate: step 7/9. The protein is Histidinol-phosphate aminotransferase of Caldanaerobacter subterraneus subsp. tengcongensis (strain DSM 15242 / JCM 11007 / NBRC 100824 / MB4) (Thermoanaerobacter tengcongensis).